A 143-amino-acid chain; its full sequence is Putative glycerol transporter Lin0368 (143 aa).

4 consecutive transmembrane segments (helical) span residues 6 to 26 (GMIG…PLAE), 27 to 47 (NYGI…MWFM), 60 to 80 (AAFV…DVFM), and 90 to 110 (LPTI…AAAI). Residues 118 to 143 (HEAKQEKTEPGMNIKEEERLNENQLV) form a disordered region.

The protein resides in the membrane. Functionally, could be involved in the glycerol uptake either via facilitated diffusion or active transport. The polypeptide is Putative glycerol transporter Lin0368 (Listeria innocua serovar 6a (strain ATCC BAA-680 / CLIP 11262)).